The following is an 80-amino-acid chain: Kappa-actitoxin-Avd4i (80 aa).

A signal peptide spans 1-19; it reads MNKALFLCLVVLCAAVVFA. Positions 20–31 are excised as a propeptide; it reads AEDLQKAKHAPF. 3 cysteine pairs are disulfide-bonded: C41–C76, C43–C69, and C59–C77.

This sequence belongs to the sea anemone type 3 (BDS) potassium channel toxin family. Weakly expressed in the ectodermal tissue from the distal and proximal tentacles, body wall, and oral disk.

The protein resides in the secreted. Its subcellular location is the nematocyst. In terms of biological role, blocks Kv3 voltage-gated potassium channels. Reduces blood pressure. This chain is Kappa-actitoxin-Avd4i, found in Anemonia viridis (Snakelocks anemone).